The chain runs to 447 residues: Probable butyrate:acetyl-CoA coenzyme A-transferase (447 aa).

220-224 (GIGGT) is a CoA binding site. Residue glutamate 245 is the 5-glutamyl coenzyme A thioester intermediate of the active site. CoA is bound by residues isoleucine 320 and glycine 343.

This sequence belongs to the acetyl-CoA hydrolase/transferase family.

The protein resides in the cytoplasm. It carries out the reaction butanoate + acetyl-CoA = butanoyl-CoA + acetate. It functions in the pathway lipid metabolism; butanoate metabolism. Coenzyme A-transferase that converts butyrate to butyryl-CoA. Involved in the syntrophic growth of S.wolfei on butyrate in cooperation with methanogens or an appropriate hydrogen-scavenging bacterium, as part of the butyrate oxidation pathway. This is Probable butyrate:acetyl-CoA coenzyme A-transferase from Syntrophomonas wolfei subsp. wolfei (strain DSM 2245B / Goettingen).